The chain runs to 253 residues: NADH-quinone oxidoreductase subunit C (253 aa).

Disordered regions lie at residues 1–33 (MSPD…DTEP) and 234–253 (IPVE…RAYS).

This sequence belongs to the complex I 30 kDa subunit family. NDH-1 is composed of 14 different subunits. Subunits NuoB, C, D, E, F, and G constitute the peripheral sector of the complex.

The protein resides in the cell membrane. It catalyses the reaction a quinone + NADH + 5 H(+)(in) = a quinol + NAD(+) + 4 H(+)(out). Functionally, NDH-1 shuttles electrons from NADH, via FMN and iron-sulfur (Fe-S) centers, to quinones in the respiratory chain. The immediate electron acceptor for the enzyme in this species is believed to be a menaquinone. Couples the redox reaction to proton translocation (for every two electrons transferred, four hydrogen ions are translocated across the cytoplasmic membrane), and thus conserves the redox energy in a proton gradient. The polypeptide is NADH-quinone oxidoreductase subunit C (Nocardia farcinica (strain IFM 10152)).